Here is a 563-residue protein sequence, read N- to C-terminus: MRLRTCLLGLLALCVASKCSYSPEPDQQRTLPPGWVSLGRVDSEEELSLTFALRQQNVERLSKLVQAVSDPGSPHYGKYLTLEDVAELVRPSPLTFRTVQKWLSAAGARNCHSVTTQDFLTCWLSVRQAELLLSGAEFHRYVGGPTEIHVIRSLRPYQLPKALAPHVDFVGGLHRFPPTSSLRQRPEPQVSGTVGLHLGVTPSVIRQRYNLTAQDVGSGTTNNSQACAQFLEQYFHASDLAEFMRLFGGNFAHQASVARVVGQQGRGRAGIEASLDVEYLMSAGANISTWVYSSPGRHESQEPFLQWLLLLSNESALPHVHTVSYGDDEDSLSSAYIQRVNTEFMKAAARGLTLLFASGDSGAGCWSVSRRHQFRPSFPASSPYVTTVGGTSFQNPFRVTTEIVDYISGGGFSNVFPQPSYQEEAVVQFLSSSPHLPPSSYFNASGRAYPDVAALSDGYWVVSNSVPIPWVSGTSASTPVFGGILSLINEHRLLSGLPPLGFLNPRLYQQRGAGLFDVTRGCHESCLNEEVQGQGFCSGPGWDPVTGWGTPNFPALLKALIKP.

An N-terminal signal peptide occupies residues 1 to 19 (MRLRTCLLGLLALCVASKC). A propeptide spans 20–195 (SYSPEPDQQR…PEPQVSGTVG (176 aa)) (removed in mature form). A disulfide bridge connects residues C111 and C122. Residues 199 to 563 (GVTPSVIRQR…PALLKALIKP (365 aa)) form the Peptidase S53 domain. 2 N-linked (GlcNAc...) asparagine glycosylation sites follow: N210 and N222. Active-site charge relay system residues include E272 and D276. N286, N313, and N443 each carry an N-linked (GlcNAc...) asparagine glycan. 2 disulfide bridges follow: C365/C526 and C522/C537. S475 (charge relay system) is an active-site residue. 2 residues coordinate Ca(2+): D517 and V518. The Ca(2+) site is built by G539, G541, and D543.

As to quaternary structure, monomer. Interacts with CLN5. Interacts with CLN3. Ca(2+) serves as cofactor. Post-translationally, activated by autocatalytic proteolytical processing upon acidification. N-glycosylation is required for processing and activity.

Its subcellular location is the lysosome. The protein resides in the melanosome. The catalysed reaction is Release of an N-terminal tripeptide from a polypeptide, but also has endopeptidase activity.. In terms of biological role, lysosomal serine protease with tripeptidyl-peptidase I activity. May act as a non-specific lysosomal peptidase which generates tripeptides from the breakdown products produced by lysosomal proteinases. Requires substrates with an unsubstituted N-terminus. The sequence is that of Tripeptidyl-peptidase 1 (TPP1) from Canis lupus familiaris (Dog).